The sequence spans 533 residues: (E)-beta-farnesene synthase (533 aa).

Mg(2+) is bound by residues D286 and D290. Residues D286, D290, R427, and N430 each contribute to the substrate site. The DDXXD motif motif lies at 286–290 (DDMMD). 2 residues coordinate Mg(2+): N430 and E438.

Belongs to the terpene synthase family. Monomer. The cofactor is Mg(2+). Mn(2+) serves as cofactor.

Its subcellular location is the cytoplasm. The enzyme catalyses (2E,6E)-farnesyl diphosphate = (E)-beta-farnesene + diphosphate. It catalyses the reaction (2E,6E)-farnesyl diphosphate = alpha-copaene + diphosphate. The catalysed reaction is (2E,6E)-farnesyl diphosphate = (1S,5S,6R)-alpha-bergamotene + diphosphate. It carries out the reaction (2E,6E)-farnesyl diphosphate = (-)-(E)-beta-caryophyllene + diphosphate. The enzyme catalyses (2E,6E)-farnesyl diphosphate = delta-cadinene + diphosphate. It catalyses the reaction (2E,6E)-farnesyl diphosphate = (+)-germacrene D + diphosphate. The catalysed reaction is (2E,6E)-farnesyl diphosphate = alpha-zingiberene + diphosphate. It carries out the reaction (2E,6E)-farnesyl diphosphate = alpha-muurolene + diphosphate. The enzyme catalyses (2E,6E)-farnesyl diphosphate = (S)-beta-bisabolene + diphosphate. It catalyses the reaction (2E,6E)-farnesyl diphosphate = beta-sesquiphellandrene + diphosphate. The catalysed reaction is (2E,6E)-farnesyl diphosphate = sesquisabinene A + diphosphate. The protein operates within secondary metabolite biosynthesis; terpenoid biosynthesis. In terms of biological role, sesquiterpene cyclase catalyzing mainly the production of beta-farnesene and alpha-bergamotene in equal amounts from farnesyl diphosphate. Also mediates the biosynthesis of minor sesquiterpene hydrocarbons including alpha-muurolene, beta-bisabolene, zingiberene, sesquiphellandrene, sesquisabinene A, germacrene D, delta-cadinene, alpha-copaene and (E)-beta-caryophyllene. Involved in indirect defense by producing volatile signals attracting natural enemies of herbivores. This is (E)-beta-farnesene synthase from Zea mays (Maize).